The following is a 151-amino-acid chain: UPF0178 protein ESA_02916 (151 aa).

Belongs to the UPF0178 family.

The polypeptide is UPF0178 protein ESA_02916 (Cronobacter sakazakii (strain ATCC BAA-894) (Enterobacter sakazakii)).